A 300-amino-acid polypeptide reads, in one-letter code: Putative hydro-lyase Dshi_3152 (300 aa).

This sequence belongs to the D-glutamate cyclase family.

In Dinoroseobacter shibae (strain DSM 16493 / NCIMB 14021 / DFL 12), this protein is Putative hydro-lyase Dshi_3152.